We begin with the raw amino-acid sequence, 459 residues long: Serine protease HTRA3 (459 aa).

The first 23 residues, 1 to 23, serve as a signal peptide directing secretion; that stretch reads MQARALLPATLAILATLAVLALA. The region spanning 27–90 is the IGFBP N-terminal domain; that stretch reads PAAPCPARCD…ECVRGVCRCR (64 aa). Disulfide bonds link cysteine 31-cysteine 54, cysteine 35-cysteine 56, cysteine 40-cysteine 57, cysteine 45-cysteine 60, cysteine 68-cysteine 82, cysteine 76-cysteine 87, cysteine 89-cysteine 107, and cysteine 96-cysteine 132. The Kazal-like domain occupies 76-134; sequence CGDSLECVRGVCRCRWTHTVCGTDGHTYADVCALQAASRRALQVSGTPVRQLQKGACPS. The interval 181–347 is serine protease; the sequence is GSGFIMSEAG…IPSDRITRFL (167 aa). Catalysis depends on charge relay system residues histidine 197, aspartate 233, and serine 311. The PDZ domain occupies 365–450; the sequence is IRMRTITPSL…EVRRGNDDLL (86 aa).

It belongs to the peptidase S1C family. As to quaternary structure, homotrimer. Interacts with MYH9. Interacts with TGFB1; the interaction inhibits TGFB-mediated signaling. Interacts with BMP4; the interaction inhibits BMP4-mediated signaling. Interacts with TGFB2 and GDF5. Highest level of isoform 1 in maternal part of the placenta, moderate level in heart, testis and ovary, low level in muscle and lung. High expression found in granulosa cells of the ovary. Expressed in bone matrix, particularly in articular chondrocytes. Very low level of isoform 2 expressed in placenta. Expressed in the bone matrix, particularly in articular chondrocytes.

It is found in the secreted. Its function is as follows. Serine protease that cleaves beta-casein/CSN2 as well as several extracellular matrix (ECM) proteoglycans such as decorin/DCN, biglycan/BGN and fibronectin/FN1. Inhibits signaling mediated by TGF-beta family proteins possibly indirectly by degradation of these ECM proteoglycans. May act as a tumor suppressor. Negatively regulates, in vitro, trophoblast invasion during placental development and may be involved in the development of the placenta in vivo. May also have a role in ovarian development, granulosa cell differentiation and luteinization. This Mus musculus (Mouse) protein is Serine protease HTRA3 (Htra3).